The primary structure comprises 140 residues: Cytochrome c-type biogenesis protein CcmE (140 aa).

Topologically, residues 1–7 (MTKRQNR) are cytoplasmic. A helical; Signal-anchor for type II membrane protein transmembrane segment spans residues 8-28 (MVLVALLVIGVSLAGYLGLKA). At 29 to 140 (FNENLLYFLS…DALEKAKNKQ (112 aa)) the chain is on the periplasmic side. 2 residues coordinate heme: His120 and Tyr124.

This sequence belongs to the CcmE/CycJ family.

It is found in the cell inner membrane. In terms of biological role, heme chaperone required for the biogenesis of c-type cytochromes. Transiently binds heme delivered by CcmC and transfers the heme to apo-cytochromes in a process facilitated by CcmF and CcmH. In Vesicomyosocius okutanii subsp. Calyptogena okutanii (strain HA), this protein is Cytochrome c-type biogenesis protein CcmE.